Reading from the N-terminus, the 273-residue chain is Bis(5'-nucleosyl)-tetraphosphatase, symmetrical (273 aa).

It belongs to the Ap4A hydrolase family.

The catalysed reaction is P(1),P(4)-bis(5'-adenosyl) tetraphosphate + H2O = 2 ADP + 2 H(+). In terms of biological role, hydrolyzes diadenosine 5',5'''-P1,P4-tetraphosphate to yield ADP. This chain is Bis(5'-nucleosyl)-tetraphosphatase, symmetrical, found in Aeromonas salmonicida (strain A449).